The sequence spans 393 residues: Prokineticin receptor 1 (393 aa).

Residues 1-63 (MEITMGVMDE…NSRTFFAAKI (63 aa)) are Extracellular-facing. N-linked (GlcNAc...) asparagine glycans are attached at residues Asn-11, Asn-14, and Asn-36. Residues 64–84 (VIGMALVGIMLVCGIGNFIFI) form a helical membrane-spanning segment. Over 85–98 (AALARYKKLRNLTN) the chain is Cytoplasmic. A helical transmembrane segment spans residues 99 to 119 (LLIANLAISDFLVAIVCCPFE). Over 120 to 145 (MDYYVVRQLSWEHGHVLCASVNYLRT) the chain is Extracellular. A disulfide bond links Cys-137 and Cys-217. The helical transmembrane segment at 146–166 (VSLYVSTNALLAIAIDRYLAI) threads the bilayer. At 167 to 179 (VHPLRPRMKYQTA) the chain is on the cytoplasmic side. A helical membrane pass occupies residues 180 to 200 (TGLIALVWVVSILVAIPSAYF). Over 201-232 (TTETVLVIVKSQEKIFCGQIWPVDQQIYYKSY) the chain is Extracellular. The chain crosses the membrane as a helical span at residues 233 to 253 (FLFIFGIEFVGPVVTMTLCYA). Residues 254-282 (RISRELWFKAVPGFQTEQIRKRLRCRRKT) are Cytoplasmic-facing. A helical membrane pass occupies residues 283 to 303 (VLVLMCILTAYVLCWAPFYGF). Residues 304 to 322 (AIVRDFFPTVFVKEKHYLT) are Extracellular-facing. A helical transmembrane segment spans residues 323–343 (AFYVVECIAMSNSMINTVCFV). Topologically, residues 344–393 (TVKNNTIKYFKKIMLLHWKASYNGSKSSGDLDLKTTGVPATEEVDCIGLK) are cytoplasmic.

This sequence belongs to the G-protein coupled receptor 1 family.

Its subcellular location is the cell membrane. Its function is as follows. Receptor for prokineticin 1. Exclusively coupled to the G(q) subclass of heteromeric G proteins. Activation leads to mobilization of calcium, stimulation of phosphoinositide turnover and activation of p44/p42 mitogen-activated protein kinase. May play a role during early pregnancy. The sequence is that of Prokineticin receptor 1 (PROKR1) from Bos taurus (Bovine).